The primary structure comprises 188 residues: Adenine phosphoribosyltransferase (188 aa).

This sequence belongs to the purine/pyrimidine phosphoribosyltransferase family. As to quaternary structure, homodimer.

Its subcellular location is the cytoplasm. It catalyses the reaction AMP + diphosphate = 5-phospho-alpha-D-ribose 1-diphosphate + adenine. Its pathway is purine metabolism; AMP biosynthesis via salvage pathway; AMP from adenine: step 1/1. Functionally, catalyzes a salvage reaction resulting in the formation of AMP, that is energically less costly than de novo synthesis. The polypeptide is Adenine phosphoribosyltransferase (Burkholderia multivorans (strain ATCC 17616 / 249)).